A 342-amino-acid chain; its full sequence is Aristolochene synthase (342 aa).

Mg(2+)-binding residues include aspartate 115, asparagine 244, serine 248, and glutamate 252. Residues arginine 340 and tyrosine 341 each coordinate (2E,6E)-farnesyl diphosphate.

The protein belongs to the terpene synthase family. Homodimer. Mg(2+) is required as a cofactor.

The enzyme catalyses (2E,6E)-farnesyl diphosphate = (+)-aristolochene + diphosphate. It functions in the pathway sesquiterpene biosynthesis; aristolochene biosynthesis; aristolochene from farnesyl diphosphate: step 1/1. In terms of biological role, aristolochene synthase; part of the gene cluster that mediates the biosynthesis of PR-toxin, a bicyclic sesquiterpene belonging to the eremophilane class and acting as a mycotoxin. The first step of the pathway is catalyzed by the aristolochene synthase which performs the cyclization of trans,trans-farnesyl diphosphate (FPP) to the bicyclic sesquiterpene aristolochene. Following the formation of aristolochene, the non-oxygenated aristolochene is converted to the trioxygenated intermediate eremofortin B, via 7-epi-neopetasone. This conversion appears to involve three enzymes, a hydroxysterol oxidase-like enzyme, the quinone-oxidase prx3 that forms the quinone-type-structure in the bicyclic nucleus of aristolochene with the C8-oxo group and the C-3 hydroxyl group, and the P450 monooxygenase ORF6 that introduces the epoxide at the double bond between carbons 1 and 2. No monoxy or dioxy-intermediates have been reported to be released to the broth, so these three early oxidative reactions may be coupled together. Eremofortin B is further oxidized by another P450 monooxygenase, that introduces a second epoxide between carbons 7 and 11 prior to acetylation to eremofortin A by the acetyltransferase ORF8. The second epoxidation may be performed by a second P450 monooxygenase. After the acetylation step, eremofortin A is converted to eremofortin C and then to PR-toxin. First the conversion of eremofortin A to eremofortin C proceeds by oxidation of the side chain of the molecule at C-12 and is catalyzed by the short-chain oxidoreductase prx1. The cytochrome P450 monooxygenase ORF5 also plays a role in this step. The primary alcohol formed at C-12 is finally oxidized by the short-chain alcohol dehydrogenase prx4 that forms PR-toxin. The polypeptide is Aristolochene synthase (Penicillium roqueforti (strain FM164)).